The following is a 243-amino-acid chain: Phosphate-specific transport system accessory protein PhoU (243 aa).

The protein belongs to the PhoU family. Homodimer. Interacts with phosphate regulon transcriptional regulatory protein PhoB and ferric uptake regulation protein Fur.

Its subcellular location is the cytoplasm. Functionally, part of the phosphate (Pho) regulon, which plays a key role in phosphate homeostasis. Encoded together with proteins of the phosphate-specific transport (Pst) system in the polycistronic pstSCAB-phoU operon. PhoU is essential for the repression of the Pho regulon at high phosphate conditions. In this role, it may bind, possibly as a chaperone, to PhoR, PhoB or a PhoR-PhoB complex to promote dephosphorylation of phospho-PhoB, or inhibit formation of the PhoR-PhoB transitory complex. This is Phosphate-specific transport system accessory protein PhoU from Edwardsiella tarda.